Reading from the N-terminus, the 205-residue chain is Lymphotoxin-alpha (205 aa).

The N-terminal stretch at 1-34 (MTPPERLFLSRVRGTPLHLLLLGLLLVLLPGAQG) is a signal peptide. O-linked (GalNAc...) threonine glycosylation is present at Thr-41. The THD domain maps to 63-205 (PAAHLIGDPS…STVFFGAFAL (143 aa)). Residue Asn-96 is glycosylated (N-linked (GlcNAc...) asparagine).

It belongs to the tumor necrosis factor family. Homotrimer, and heterotrimer of either two LTB and one LTA subunits or (less prevalent) two LTA and one LTB subunits. Interacts with TNFRSF14.

Its subcellular location is the secreted. The protein localises to the membrane. In terms of biological role, cytokine that in its homotrimeric form binds to TNFRSF1A/TNFR1, TNFRSF1B/TNFBR and TNFRSF14/HVEM. In its heterotrimeric form with LTB binds to TNFRSF3/LTBR. Lymphotoxin is produced by lymphocytes and is cytotoxic for a wide range of tumor cells in vitro and in vivo. This is Lymphotoxin-alpha (LTA) from Macaca mulatta (Rhesus macaque).